Consider the following 104-residue polypeptide: Large ribosomal subunit protein bL21 (104 aa).

It belongs to the bacterial ribosomal protein bL21 family. In terms of assembly, part of the 50S ribosomal subunit. Contacts protein L20.

Its function is as follows. This protein binds to 23S rRNA in the presence of protein L20. This chain is Large ribosomal subunit protein bL21, found in Francisella philomiragia subsp. philomiragia (strain ATCC 25017 / CCUG 19701 / FSC 153 / O#319-036).